We begin with the raw amino-acid sequence, 85 residues long: MLAGMPSLSHEEQQEAVERIHKFMSEGMSSGEAIALVAAEIRERHQNDPQAMAIFEDHDFDEHTESDYRRDDEPDADDIEDPYEG.

The disordered stretch occupies residues 50–85; it reads QAMAIFEDHDFDEHTESDYRRDDEPDADDIEDPYEG. Residues 55 to 72 are compositionally biased toward basic and acidic residues; that stretch reads FEDHDFDEHTESDYRRDD. The segment covering 73 to 85 has biased composition (acidic residues); that stretch reads EPDADDIEDPYEG.

The protein belongs to the UPF0181 family.

This Yersinia pestis protein is UPF0181 protein YPO1774/y2534/YP_1619.